Consider the following 373-residue polypeptide: mRNA export factor rae-1 (373 aa).

N-acetylmethionine is present on Met1. WD repeat units lie at residues 40 to 82 (APED…TFEG), 87 to 126 (NIPA…VAVV), 128 to 169 (THDG…NQTQ), and 276 to 315 (QEIY…KLKT).

It belongs to the WD repeat rae1 family. The nuclear pore complex (NPC) constitutes the exclusive means of nucleocytoplasmic transport. NPCs allow the passive diffusion of ions and small molecules and the active, nuclear transport receptor-mediated bidirectional transport of macromolecules such as proteins, RNAs, ribonucleoparticles (RNPs), and ribosomal subunits across the nuclear envelope. Interacts with rpm-1. As to expression, expressed along the ventral and dorsal nerve cords.

It localises to the nucleus. The protein resides in the nuclear pore complex. Its subcellular location is the cell projection. The protein localises to the axon. It is found in the synapse. In terms of biological role, functions as a component of the nuclear pore complex (NPC). NPC components, collectively referred to as nucleoporins (NUPs), can play the role of both NPC structural components and of docking or interaction partners for transiently associated nuclear transport factors. It is specifically important for nuclear mRNA export. Has a role in neuronal development, where it acts downstream of rpm-1 to control axon termination and synapse formation in anterior lateral microtubule (ALM) and posterior lateral microtubule (PLM) mechanosensory neurons. This Caenorhabditis elegans protein is mRNA export factor rae-1.